We begin with the raw amino-acid sequence, 490 residues long: N-succinylglutamate 5-semialdehyde dehydrogenase (490 aa).

G223–G228 contacts NAD(+). Active-site residues include E246 and C280.

Belongs to the aldehyde dehydrogenase family. AstD subfamily.

The enzyme catalyses N-succinyl-L-glutamate 5-semialdehyde + NAD(+) + H2O = N-succinyl-L-glutamate + NADH + 2 H(+). It participates in amino-acid degradation; L-arginine degradation via AST pathway; L-glutamate and succinate from L-arginine: step 4/5. Functionally, catalyzes the NAD-dependent reduction of succinylglutamate semialdehyde into succinylglutamate. This chain is N-succinylglutamate 5-semialdehyde dehydrogenase, found in Pseudoalteromonas atlantica (strain T6c / ATCC BAA-1087).